Reading from the N-terminus, the 862-residue chain is Switch 2 (862 aa).

Disordered regions lie at residues 13–43 (PCGSFPSSSSLRVSSTQELEPSRKPPKSSLS) and 58–95 (KHESKISKTQVEDFDHNEDDHKRNIKFDEEEVDEDDER). Positions 16-27 (SFPSSSSLRVSS) are enriched in low complexity. The segment covering 58–84 (KHESKISKTQVEDFDHNEDDHKRNIKF) has biased composition (basic and acidic residues). The span at 85 to 95 (DEEEVDEDDER) shows a compositional bias: acidic residues. Residues 151 to 323 (YNLYKNNHGG…FNLFEWVAPG (173 aa)) enclose the Helicase ATP-binding domain. 164-171 (DDMGLGKT) contacts ATP. The DEAH box signature appears at 274 to 277 (DEAH). Residues 274 to 294 (DEAHRLKNEKSKLYEACLEIK) adopt a coiled-coil conformation. The Helicase C-terminal domain maps to 532–685 (ALEKLMASWI…VAGKMETRYF (154 aa)). Over residues 782 to 793 (TTSTSQRLNGDG) the composition is skewed to polar residues. A disordered region spans residues 782 to 821 (TTSTSQRLNGDGNSADRKKKKRKGCSEEEDMSSSNREQKR).

The protein belongs to the SNF2/RAD54 helicase family.

In terms of biological role, may be involved in early DNA damage response. Probable chromatin remodeling factor. This Arabidopsis thaliana (Mouse-ear cress) protein is Switch 2.